Consider the following 125-residue polypeptide: Small ribosomal subunit protein uS11m (125 aa).

The protein belongs to the universal ribosomal protein uS11 family.

Its subcellular location is the mitochondrion. In Marchantia polymorpha (Common liverwort), this protein is Small ribosomal subunit protein uS11m (RPS11).